The sequence spans 270 residues: 3-methyl-2-oxobutanoate hydroxymethyltransferase (270 aa).

Asp43 and Asp82 together coordinate Mg(2+). 3-methyl-2-oxobutanoate-binding positions include 43–44 (DS), Asp82, and Lys110. Glu112 is a Mg(2+) binding site. The active-site Proton acceptor is the Glu179.

This sequence belongs to the PanB family. As to quaternary structure, homodecamer; pentamer of dimers. The cofactor is Mg(2+).

The protein resides in the cytoplasm. It carries out the reaction 3-methyl-2-oxobutanoate + (6R)-5,10-methylene-5,6,7,8-tetrahydrofolate + H2O = 2-dehydropantoate + (6S)-5,6,7,8-tetrahydrofolate. It functions in the pathway cofactor biosynthesis; (R)-pantothenate biosynthesis; (R)-pantoate from 3-methyl-2-oxobutanoate: step 1/2. Its function is as follows. Catalyzes the reversible reaction in which hydroxymethyl group from 5,10-methylenetetrahydrofolate is transferred onto alpha-ketoisovalerate to form ketopantoate. The polypeptide is 3-methyl-2-oxobutanoate hydroxymethyltransferase (Psychrobacter sp. (strain PRwf-1)).